An 87-amino-acid chain; its full sequence is MYLIELALKLSPLPLSVQRKKLEDAKALYNQLKESLKKGDPRLLEISCEQVEDKKIAVLVSEVLAVQMYEKTAGAGGNRRPGFSFDE.

It belongs to the UPF0367 family.

The protein is UPF0367 protein Pro_0144 of Prochlorococcus marinus (strain SARG / CCMP1375 / SS120).